The following is a 146-amino-acid chain: D-aminoacyl-tRNA deacylase (146 aa).

The short motif at 137 to 138 (GP) is the Gly-cisPro motif, important for rejection of L-amino acids element.

The protein belongs to the DTD family. As to quaternary structure, homodimer.

The protein resides in the cytoplasm. It catalyses the reaction glycyl-tRNA(Ala) + H2O = tRNA(Ala) + glycine + H(+). The enzyme catalyses a D-aminoacyl-tRNA + H2O = a tRNA + a D-alpha-amino acid + H(+). Its function is as follows. An aminoacyl-tRNA editing enzyme that deacylates mischarged D-aminoacyl-tRNAs. Also deacylates mischarged glycyl-tRNA(Ala), protecting cells against glycine mischarging by AlaRS. Acts via tRNA-based rather than protein-based catalysis; rejects L-amino acids rather than detecting D-amino acids in the active site. By recycling D-aminoacyl-tRNA to D-amino acids and free tRNA molecules, this enzyme counteracts the toxicity associated with the formation of D-aminoacyl-tRNA entities in vivo and helps enforce protein L-homochirality. The sequence is that of D-aminoacyl-tRNA deacylase from Thermodesulfovibrio yellowstonii (strain ATCC 51303 / DSM 11347 / YP87).